Reading from the N-terminus, the 541-residue chain is MDIFVANPLLALFVIMAVGLAIGQVKIRGFSLGVAAVLFAGVGFAAVEPDIHIPHLVYILGLSIFVYSIGLESGHAFFALFKSQGVKQNALAITALALITGISIALFSLIHLNGVTAAGLFTGAVTNTPAMAAVVDSLPSIFGDANKVHEVESLPLVAYSLAYPIGVLGVIAAIGLCAKWFRIDHVQEAHDAGVAVEDLFTRQIKVNHVVTGSDLVIDIHHTLGLEIIVSRIERDGQQTLPTASSRIHMGDVLSVVGTAEELDKAAHVLGDLLPGDPFHGHDLDYRRIFVSNQDLVGIPLAKLRPRLSGILITRVRRGDHDHVATPETVLQLGDRVRVVAAHDRMKSVTALFGDSYRRLSDFNLFPLVAGLALGLLVGMIEVPLPGGAALSLGSAGGPLVVALVLGAVGRSGRFVWQVPYGANLALRQLGITLFLAAIGTTAGASFRASLSDPASLTIIAVGAIITLTLAIFVLVVGYKVMKIPYGQTAGMLAGIQTHPAVLSYVSAMTKNDLPALGYTSVYPLAMIAKIIAAQVVLFALT.

The next 5 membrane-spanning stretches (helical) occupy residues 4-23, 30-47, 57-79, 91-113, and 156-178; these read FVAN…LAIG, FSLG…FAAV, VYIL…AFFA, LAIT…IHLN, and LVAY…GLCA. 2 RCK C-terminal domains span residues 187-271 and 273-354; these read QEAH…VLGD and LPGD…LFGD. 5 helical membrane passes run 362–384, 389–411, 424–446, 456–478, and 516–538; these read FNLF…EVPL, ALSL…VGRS, LALR…GASF, LTII…VVGY, and LGYT…VVLF.

Belongs to the AAE transporter (TC 2.A.81) family.

It is found in the cell membrane. This is an uncharacterized protein from Corynebacterium diphtheriae (strain ATCC 700971 / NCTC 13129 / Biotype gravis).